We begin with the raw amino-acid sequence, 164 residues long: Cytochrome c-type biogenesis protein CcmE (164 aa).

Over 1 to 7 (MTRKQRR) the chain is Cytoplasmic. Residues 8-28 (LLMIGGAGVVLVVAVGLVLNA) form a helical; Signal-anchor for type II membrane protein membrane-spanning segment. Topologically, residues 29-164 (MRGSIVFFST…ASADAAGPSR (136 aa)) are periplasmic. Positions 122 and 126 each coordinate heme. The segment covering 137-149 (KQGHWKDDYEKKP) has biased composition (basic and acidic residues). Residues 137 to 164 (KQGHWKDDYEKKPPGAPGASADAAGPSR) form a disordered region. Residues 153 to 164 (PGASADAAGPSR) are compositionally biased toward low complexity.

This sequence belongs to the CcmE/CycJ family.

The protein resides in the cell inner membrane. Heme chaperone required for the biogenesis of c-type cytochromes. Transiently binds heme delivered by CcmC and transfers the heme to apo-cytochromes in a process facilitated by CcmF and CcmH. This Rhodopseudomonas palustris (strain BisB5) protein is Cytochrome c-type biogenesis protein CcmE.